A 567-amino-acid polypeptide reads, in one-letter code: Proline--tRNA ligase (567 aa).

This sequence belongs to the class-II aminoacyl-tRNA synthetase family. ProS type 1 subfamily. Homodimer.

It localises to the cytoplasm. It carries out the reaction tRNA(Pro) + L-proline + ATP = L-prolyl-tRNA(Pro) + AMP + diphosphate. Catalyzes the attachment of proline to tRNA(Pro) in a two-step reaction: proline is first activated by ATP to form Pro-AMP and then transferred to the acceptor end of tRNA(Pro). As ProRS can inadvertently accommodate and process non-cognate amino acids such as alanine and cysteine, to avoid such errors it has two additional distinct editing activities against alanine. One activity is designated as 'pretransfer' editing and involves the tRNA(Pro)-independent hydrolysis of activated Ala-AMP. The other activity is designated 'posttransfer' editing and involves deacylation of mischarged Ala-tRNA(Pro). The misacylated Cys-tRNA(Pro) is not edited by ProRS. The chain is Proline--tRNA ligase from Staphylococcus aureus (strain Mu3 / ATCC 700698).